The chain runs to 115 residues: Large ribosomal subunit protein bL20 (115 aa).

This sequence belongs to the bacterial ribosomal protein bL20 family.

Its function is as follows. Binds directly to 23S ribosomal RNA and is necessary for the in vitro assembly process of the 50S ribosomal subunit. It is not involved in the protein synthesizing functions of that subunit. The sequence is that of Large ribosomal subunit protein bL20 from Chlorobaculum parvum (strain DSM 263 / NCIMB 8327) (Chlorobium vibrioforme subsp. thiosulfatophilum).